Reading from the N-terminus, the 182-residue chain is Transmembrane protein 11 homolog, mitochondrial (182 aa).

Ser-25 is subject to Phosphoserine. 2 helical membrane-spanning segments follow: residues 70–89 (TAVATGVVSLVASLLWRDRP) and 91–108 (IAAPACALSIFCTGLYTV).

Belongs to the TMEM11 family.

The protein resides in the mitochondrion inner membrane. Plays a role in mitochondrial morphogenesis. The polypeptide is Transmembrane protein 11 homolog, mitochondrial (Pmi) (Drosophila melanogaster (Fruit fly)).